Consider the following 286-residue polypeptide: Aminoglycoside N(3)-acetyltransferase VIII (286 aa).

Belongs to the antibiotic N-acetyltransferase family.

The enzyme catalyses a 2-deoxystreptamine antibiotic + acetyl-CoA = an N(3)-acetyl-2-deoxystreptamine antibiotic + CoA + H(+). In terms of biological role, resistance to neomycin. This is Aminoglycoside N(3)-acetyltransferase VIII (aacC8) from Streptomyces fradiae (Streptomyces roseoflavus).